A 145-amino-acid polypeptide reads, in one-letter code: Phospholipase A2, membrane associated (145 aa).

An N-terminal signal peptide occupies residues 1-20 (MKLLLLLLVVMASDLPQAHG). 7 cysteine pairs are disulfide-bonded: cysteine 46/cysteine 138, cysteine 48/cysteine 64, cysteine 63/cysteine 118, cysteine 69/cysteine 145, cysteine 70/cysteine 111, cysteine 79/cysteine 104, and cysteine 97/cysteine 109. Positions 47, 49, and 51 each coordinate Ca(2+). Histidine 67 is a catalytic residue. Aspartate 68 provides a ligand contact to Ca(2+). Residue aspartate 112 is part of the active site.

It belongs to the phospholipase A2 family. Ca(2+) serves as cofactor. In terms of tissue distribution, alveolar macrophages, and at much lower levels in peripheral blood monocytes and peritoneal macrophages.

The protein localises to the secreted. It localises to the cell membrane. It is found in the mitochondrion outer membrane. It carries out the reaction a 1,2-diacyl-sn-glycero-3-phosphoethanolamine + H2O = a 1-acyl-sn-glycero-3-phosphoethanolamine + a fatty acid + H(+). The enzyme catalyses 1-hexadecanoyl-2-(9Z-octadecenoyl)-sn-glycero-3-phosphoethanolamine + H2O = 1-hexadecanoyl-sn-glycero-3-phosphoethanolamine + (9Z)-octadecenoate + H(+). It catalyses the reaction 1-hexadecanoyl-2-(9Z,12Z-octadecadienoyl)-sn-glycero-3-phosphoethanolamine + H2O = 1-hexadecanoyl-sn-glycero-3-phosphoethanolamine + (9Z,12Z)-octadecadienoate + H(+). The catalysed reaction is 1-hexadecanoyl-2-(5Z,8Z,11Z,14Z-eicosatetraenoyl)-sn-glycero-3-phosphoethanolamine + H2O = 1-hexadecanoyl-sn-glycero-3-phosphoethanolamine + (5Z,8Z,11Z,14Z)-eicosatetraenoate + H(+). It carries out the reaction N-hexadecanoyl-1,2-di-(9Z-octadecenoyl)-sn-glycero-3-phosphoethanolamine + H2O = N-hexadecanoyl-1-(9Z-octadecenoyl)-sn-glycero-3-phosphoethanolamine + (9Z)-octadecenoate + H(+). The enzyme catalyses 1,2-dihexadecanoyl-sn-glycero-3-phospho-(1'-sn-glycerol) + H2O = 1-hexadecanoyl-sn-glycero-3-phospho-(1'-sn-glycerol) + hexadecanoate + H(+). It catalyses the reaction 1-hexadecanoyl-2-(9Z-octadecenoyl)-sn-glycero-3-phosphoglycerol + H2O = 1-hexadecanoyl-sn-glycero-3-phosphoglycerol + (9Z)-octadecenoate + H(+). The catalysed reaction is 1-hexadecanoyl-2-(9Z-octadecenoyl)-sn-glycero-3-phospho-(1'-sn-glycerol) + H2O = 1-hexadecanoyl-sn-glycero-3-phospho-(1'-sn-glycerol) + (9Z)-octadecenoate + H(+). It carries out the reaction a 1,2-diacyl-sn-glycero-3-phosphocholine + H2O = a 1-acyl-sn-glycero-3-phosphocholine + a fatty acid + H(+). The enzyme catalyses 1,2-dihexadecanoyl-sn-glycero-3-phosphocholine + H2O = 1-hexadecanoyl-sn-glycero-3-phosphocholine + hexadecanoate + H(+). It catalyses the reaction 1-hexadecanoyl-2-(9Z-octadecenoyl)-sn-glycero-3-phosphocholine + H2O = 1-hexadecanoyl-sn-glycero-3-phosphocholine + (9Z)-octadecenoate + H(+). The catalysed reaction is 1-hexadecanoyl-2-(9Z,12Z-octadecadienoyl)-sn-glycero-3-phosphocholine + H2O = (9Z,12Z)-octadecadienoate + 1-hexadecanoyl-sn-glycero-3-phosphocholine + H(+). It carries out the reaction 1-hexadecanoyl-2-(4Z,7Z,10Z,13Z,16Z,19Z-docosahexaenoyl)-sn-glycero-3-phosphocholine + H2O = (4Z,7Z,10Z,13Z,16Z,19Z)-docosahexaenoate + 1-hexadecanoyl-sn-glycero-3-phosphocholine + H(+). Secretory calcium-dependent phospholipase A2 that primarily targets extracellular phospholipids with implications in host antimicrobial defense, inflammatory response and tissue regeneration. Hydrolyzes the ester bond of the fatty acyl group attached at sn-2 position of phospholipids (phospholipase A2 activity) with preference for phosphatidylethanolamines and phosphatidylglycerols over phosphatidylcholines. Contributes to lipid remodeling of cellular membranes and generation of lipid mediators involved in pathogen clearance. Displays bactericidal activity against Gram-positive bacteria by directly hydrolyzing phospholipids of the bacterial membrane. Upon sterile inflammation, targets membrane phospholipids of extracellular mitochondria released from activated platelets, generating free unsaturated fatty acids such as arachidonate that is used by neighboring leukocytes to synthesize inflammatory eicosanoids such as leukotrienes. Simultaneously, by compromising mitochondrial membrane integrity, promotes the release in circulation of potent damage-associated molecular pattern molecules that activate the innate immune response. Plays a stem cell regulator role in the intestinal crypt. Within intracellular compartment mediates Paneth cell differentiation and its stem cell supporting functions by inhibiting Wnt signaling pathway in intestinal stem cell (ICS). Secreted in the intestinal lumen upon inflammation, acts in an autocrine way and promotes prostaglandin E2 synthesis that stimulates Wnt signaling pathway in ICS cells and tissue regeneration. May play a role in the biosynthesis of N-acyl ethanolamines that regulate energy metabolism and inflammation. Hydrolyzes N-acyl phosphatidylethanolamines to N-acyl lysophosphatidylethanolamines, which are further cleaved by a lysophospholipase D to release N-acyl ethanolamines. Independent of its catalytic activity, acts as a ligand for integrins. Binds to and activates integrins ITGAV:ITGB3, ITGA4:ITGB1 and ITGA5:ITGB1. Binds to a site (site 2) which is distinct from the classical ligand-binding site (site 1) and induces integrin conformational changes and enhanced ligand binding to site 1. Induces cell proliferation in an integrin-dependent manner. In Cavia porcellus (Guinea pig), this protein is Phospholipase A2, membrane associated (PLA2G2A).